A 388-amino-acid chain; its full sequence is 5-hydroxytryptamine receptor 4 (388 aa).

The Extracellular segment spans residues 1-19 (MDKLDANVSSKEGFGSVEK). N-linked (GlcNAc...) asparagine glycosylation is present at Asn-7. Residues 20–44 (VVLLTFLSAVILMAILGNLLVMVAV) form a helical membrane-spanning segment. Over 45 to 54 (CRDRQLRKIK) the chain is Cytoplasmic. Residues 55 to 78 (TNYFIVSLAFADLLVSVLVMPFGA) traverse the membrane as a helical segment. The Extracellular segment spans residues 79–92 (IELVQDIWVYGEMF). A helical membrane pass occupies residues 93–117 (CLVRTSLDVLLTTASIFHLCCISLD). An intrachain disulfide couples Cys-93 to Cys-184. Asp-100 is a binding site for serotonin. The Cytoplasmic portion of the chain corresponds to 118 to 133 (RYYAICCQPLVYRNKM). The chain crosses the membrane as a helical span at residues 134–157 (TPLRIALMLGGCWVIPMFISFLPI). Topologically, residues 158 to 188 (MQGWNNIGIVDLIEKRKFNQNSNSTYCVFMV) are extracellular. A helical membrane pass occupies residues 189–212 (NKPYAITCSVVAFYIPFLLMVLAY). Over 213–257 (YRIYVTAKEHARQIQVLQRAGAPAEGRPQPADQHSTHRMRTETKA) the chain is Cytoplasmic. A helical membrane pass occupies residues 258-283 (AKTLCIIMGCFCLCWAPFFVTNIVDP). Asn-279 provides a ligand contact to serotonin. The Extracellular portion of the chain corresponds to 284–290 (FIDYTVP). The helical transmembrane segment at 291-314 (GQLWTAFLWLGYINSGLNPFLYAF) threads the bilayer. Residues 315 to 388 (LNKSFRRAFL…PLVAAQPIDT (74 aa)) lie on the Cytoplasmic side of the membrane.

It belongs to the G-protein coupled receptor 1 family. As to quaternary structure, interacts (via C-terminus 330-346 AA) with GRK5; this interaction is promoted by 5-HT (serotonin).

The protein resides in the cell membrane. Its subcellular location is the endosome membrane. Its function is as follows. G-protein coupled receptor for 5-hydroxytryptamine (serotonin), a biogenic hormone that functions as a neurotransmitter, a hormone and a mitogen. Ligand binding causes a conformation change that triggers signaling via guanine nucleotide-binding proteins (G proteins) and modulates the activity of downstream effectors. HTR4 is coupled to G(s) G alpha proteins and mediates activation of adenylate cyclase activity. The polypeptide is 5-hydroxytryptamine receptor 4 (HTR4) (Cavia porcellus (Guinea pig)).